Here is a 339-residue protein sequence, read N- to C-terminus: Ketol-acid reductoisomerase (NADP(+)) (339 aa).

The 182-residue stretch at methionine 1–threonine 182 folds into the KARI N-terminal Rossmann domain. NADP(+)-binding positions include tyrosine 24–glutamine 27, arginine 48, serine 51, serine 53, and aspartate 83–glutamine 86. The active site involves histidine 108. Glycine 134 provides a ligand contact to NADP(+). Residues threonine 183–isoleucine 328 enclose the KARI C-terminal knotted domain. Mg(2+) is bound by residues aspartate 191, glutamate 195, glutamate 227, and glutamate 231. Residue serine 252 participates in substrate binding.

It belongs to the ketol-acid reductoisomerase family. It depends on Mg(2+) as a cofactor.

The catalysed reaction is (2R)-2,3-dihydroxy-3-methylbutanoate + NADP(+) = (2S)-2-acetolactate + NADPH + H(+). The enzyme catalyses (2R,3R)-2,3-dihydroxy-3-methylpentanoate + NADP(+) = (S)-2-ethyl-2-hydroxy-3-oxobutanoate + NADPH + H(+). It functions in the pathway amino-acid biosynthesis; L-isoleucine biosynthesis; L-isoleucine from 2-oxobutanoate: step 2/4. Its pathway is amino-acid biosynthesis; L-valine biosynthesis; L-valine from pyruvate: step 2/4. Functionally, involved in the biosynthesis of branched-chain amino acids (BCAA). Catalyzes an alkyl-migration followed by a ketol-acid reduction of (S)-2-acetolactate (S2AL) to yield (R)-2,3-dihydroxy-isovalerate. In the isomerase reaction, S2AL is rearranged via a Mg-dependent methyl migration to produce 3-hydroxy-3-methyl-2-ketobutyrate (HMKB). In the reductase reaction, this 2-ketoacid undergoes a metal-dependent reduction by NADPH to yield (R)-2,3-dihydroxy-isovalerate. In Chelativorans sp. (strain BNC1), this protein is Ketol-acid reductoisomerase (NADP(+)).